The following is a 337-amino-acid chain: MAVEMFYDDDADLSIIQGRKVAVIGYGSQGHAHSLSLRDSGVDVRIGLKEGSKSREKAQEQGLTVGTPAEVSEWADVIMVLAPDTAQASIFTNDIEPNLKDGDALFFGHGLNIHFDLIKAPEFVTVGMVAPKGPGHLVRRQFVDGKGVPALIAIDQDPKGEGQALALSYAKGIGGTRAGVIKTTFKEETETDLFGEQAVLCGGTEELVKTGFEVMVEAGYAPEMAYFEVLHELKLIVDLMYEGGIARMNYSVSDTAEFGGYLSGPRVIDADTKERMKAILADIQSGEFTRRLVANVENGNTELEGLRKANAEHPIEVTGKKLRDLMSWVDRPITETA.

In terms of domain architecture, KARI N-terminal Rossmann spans 3–183; it reads VEMFYDDDAD…GGTRAGVIKT (181 aa). NADP(+) is bound by residues 26–29, lysine 49, serine 52, serine 54, and 84–87; these read YGSQ and DTAQ. The active site involves histidine 109. Position 135 (glycine 135) interacts with NADP(+). The region spanning 184 to 329 is the KARI C-terminal knotted domain; the sequence is TFKEETETDL…KKLRDLMSWV (146 aa). The Mg(2+) site is built by aspartate 192, glutamate 196, glutamate 228, and glutamate 232. Serine 253 is a substrate binding site.

It belongs to the ketol-acid reductoisomerase family. Mg(2+) is required as a cofactor.

It catalyses the reaction (2R)-2,3-dihydroxy-3-methylbutanoate + NADP(+) = (2S)-2-acetolactate + NADPH + H(+). The catalysed reaction is (2R,3R)-2,3-dihydroxy-3-methylpentanoate + NADP(+) = (S)-2-ethyl-2-hydroxy-3-oxobutanoate + NADPH + H(+). It functions in the pathway amino-acid biosynthesis; L-isoleucine biosynthesis; L-isoleucine from 2-oxobutanoate: step 2/4. It participates in amino-acid biosynthesis; L-valine biosynthesis; L-valine from pyruvate: step 2/4. Functionally, involved in the biosynthesis of branched-chain amino acids (BCAA). Catalyzes an alkyl-migration followed by a ketol-acid reduction of (S)-2-acetolactate (S2AL) to yield (R)-2,3-dihydroxy-isovalerate. In the isomerase reaction, S2AL is rearranged via a Mg-dependent methyl migration to produce 3-hydroxy-3-methyl-2-ketobutyrate (HMKB). In the reductase reaction, this 2-ketoacid undergoes a metal-dependent reduction by NADPH to yield (R)-2,3-dihydroxy-isovalerate. This Rhodococcus erythropolis (strain PR4 / NBRC 100887) protein is Ketol-acid reductoisomerase (NADP(+)).